Consider the following 429-residue polypeptide: UDP-N-acetylglucosamine 1-carboxyvinyltransferase (429 aa).

Residue 22 to 23 (KN) participates in phosphoenolpyruvate binding. Residue Arg102 participates in UDP-N-acetyl-alpha-D-glucosamine binding. Catalysis depends on Cys126, which acts as the Proton donor. Cys126 bears the 2-(S-cysteinyl)pyruvic acid O-phosphothioketal mark. UDP-N-acetyl-alpha-D-glucosamine-binding positions include 131–135 (RPVDL), Asp316, and Ile338.

It belongs to the EPSP synthase family. MurA subfamily.

It is found in the cytoplasm. The enzyme catalyses phosphoenolpyruvate + UDP-N-acetyl-alpha-D-glucosamine = UDP-N-acetyl-3-O-(1-carboxyvinyl)-alpha-D-glucosamine + phosphate. It functions in the pathway cell wall biogenesis; peptidoglycan biosynthesis. Its function is as follows. Cell wall formation. Adds enolpyruvyl to UDP-N-acetylglucosamine. The polypeptide is UDP-N-acetylglucosamine 1-carboxyvinyltransferase (Rhodopseudomonas palustris (strain BisB5)).